The sequence spans 419 residues: MSFIPVAEDSDFPIQNLPYGVFSTQSNPKPRIGVAIGDQILDLSVIKHLFTGPVLSKHQHVFDETTLNSFMGLGQAAWKEARASLQNLLSASQAQLRDDKELRQRAFTSQASATMHLPATIGDYTDFYSSLQHATNVGIMFRGKENALLPNWLHLPVGYHGRASSVVVSGTPIRRPMGQMRPDNSKPPVYGASKRLDMELEMAFFVGPGNRFGEPIPISKAQEHIFGMVLMNDWSARDIQQWEYVPLGPFLGKSFGTTISPWVVPMDALMPFVVPNPKQDPKPLPYLCHSQPYTFDINLSVALKGEGMSQAATICRSNFKHMYWTILQQLTHHSVNGCNLRPGDLLASGTISGSDPESFGSMLELSWKGTKAIDVGQGQTRTFLLDGDEVIITGHCQGDGYRVGFGQCAGKVLPALSPA.

Position 2 is an N-acetylserine (Ser2). 2 positions are modified to phosphoserine: Ser84 and Ser92. Asp126 is a Ca(2+) binding site. Substrate is bound at residue Tyr128. His133 functions as the Proton acceptor in the catalytic mechanism. Arg142 is a binding site for substrate. 3 residues coordinate Ca(2+): Glu199, Glu201, and Asp233. Residue Asp233 participates in Mg(2+) binding. Residues Gln240 and Tyr244 each coordinate substrate. Lys253 and Thr257 together coordinate Mg(2+). The residue at position 309 (Ser309) is a Phosphoserine. Thr350 contributes to the substrate binding site. Residue Ser417 is modified to Phosphoserine.

This sequence belongs to the FAH family. As to quaternary structure, homodimer. Ca(2+) is required as a cofactor. It depends on Mg(2+) as a cofactor. In terms of tissue distribution, mainly in liver and kidney.

The enzyme catalyses 4-fumarylacetoacetate + H2O = acetoacetate + fumarate + H(+). Its pathway is amino-acid degradation; L-phenylalanine degradation; acetoacetate and fumarate from L-phenylalanine: step 6/6. The polypeptide is Fumarylacetoacetase (Fah) (Rattus norvegicus (Rat)).